Here is a 444-residue protein sequence, read N- to C-terminus: Protein kinase C and casein kinase substrate in neurons protein 1 (444 aa).

Residues S2 and S79 each carry the phosphoserine modification. Residues 13 to 283 (EETTDSFWEV…AIRGADAQED (271 aa)) enclose the F-BAR domain. The stretch at 26 to 275 (KRTVKRIDDG…HVYRELEQAI (250 aa)) forms a coiled coil. Disordered regions lie at residues 173 to 194 (REMN…LQDK) and 309 to 386 (LPHT…DDSK). T184 bears the Phosphothreonine mark. Residues 314 to 324 (TKKEKQPKKAE) are compositionally biased toward basic and acidic residues. The span at 329–351 (TNATGAVESTSQAGDRGSVSSYD) shows a compositional bias: polar residues. Phosphoserine is present on residues S346, S348, S349, S361, and S365. Residues 385–444 (SKGVRVRALYDYDGQEQDELSFKAGDELTKLGEEDEQGWCRGRLDSGQLGLYPANYVEAI) enclose the SH3 domain. The residue at position 394 (Y394) is a Phosphotyrosine. S405 and S430 each carry phosphoserine.

The protein belongs to the PACSIN family. As to quaternary structure, homodimer. May form heterooligomers with other PACSINs. Interacts with both COBL and DBNL. Identified in a complex composed of COBL, PACSIN1 and WASL. Interacts (via SH3 domain) with SYNJ1 and WASL. Interacts (via SH3 domain) with DNM1; the interaction is reduced by DNM1 phosphorylation. Interacts with DNM2 and DNM3. Interacts with MAPT. Interacts with EHD1 and EHD3. Interacts with TRPV4. In terms of processing, phosphorylated by casein kinase 2 (CK2) and protein kinase C (PKC).

Its subcellular location is the cytoplasm. The protein localises to the cell projection. The protein resides in the synapse. It localises to the synaptosome. It is found in the ruffle membrane. Its subcellular location is the membrane. The protein localises to the cytoplasmic vesicle membrane. The protein resides in the cytosol. It localises to the cell membrane. Its function is as follows. Binds to membranes via its F-BAR domain and mediates membrane tubulation. Plays a role in the reorganization of the microtubule cytoskeleton via its interaction with MAPT; this decreases microtubule stability and inhibits MAPT-induced microtubule polymerization. Plays a role in cellular transport processes by recruiting DNM1, DNM2 and DNM3 to membranes. Plays a role in the reorganization of the actin cytoskeleton and in neuron morphogenesis via its interaction with COBL and WASL, and by recruiting COBL to the cell cortex. Plays a role in the regulation of neurite formation, neurite branching and the regulation of neurite length. Required for normal synaptic vesicle endocytosis; this process retrieves previously released neurotransmitters to accommodate multiple cycles of neurotransmission. Required for normal excitatory and inhibitory synaptic transmission. The chain is Protein kinase C and casein kinase substrate in neurons protein 1 (Pacsin1) from Pongo abelii (Sumatran orangutan).